The following is a 538-amino-acid chain: NADH-quinone oxidoreductase subunit N (538 aa).

14 helical membrane-spanning segments follow: residues 28-48, 57-77, 94-114, 147-167, 170-190, 206-226, 249-269, 288-308, 315-335, 343-363, 380-400, 424-444, 458-478, and 503-523; these read LAPV…EAFV, QIIV…TTIA, PTLA…VLFA, HTEV…FAAA, LIMM…LCGM, FLLG…LYGC, IVAG…AVPF, MAVA…YVGL, WQIV…IVGL, LLAY…VGAW, VLVY…LILM, IGVL…TAGF, GYAW…AFYL, and IAGW…GVAP.

This sequence belongs to the complex I subunit 2 family. NDH-1 is composed of 14 different subunits. Subunits NuoA, H, J, K, L, M, N constitute the membrane sector of the complex.

The protein localises to the cell membrane. The catalysed reaction is a quinone + NADH + 5 H(+)(in) = a quinol + NAD(+) + 4 H(+)(out). In terms of biological role, NDH-1 shuttles electrons from NADH, via FMN and iron-sulfur (Fe-S) centers, to quinones in the respiratory chain. The immediate electron acceptor for the enzyme in this species is believed to be a menaquinone. Couples the redox reaction to proton translocation (for every two electrons transferred, four hydrogen ions are translocated across the cytoplasmic membrane), and thus conserves the redox energy in a proton gradient. In Cutibacterium acnes (strain DSM 16379 / KPA171202) (Propionibacterium acnes), this protein is NADH-quinone oxidoreductase subunit N.